The sequence spans 863 residues: Penicillin-binding protein 1A (863 aa).

Residues 1–28 (MTENRDNKTSQSEKTTQKKKKKKFKAFK) lie on the Cytoplasmic side of the membrane. The chain crosses the membrane as a helical; Signal-anchor for type II membrane protein span at residues 29–49 (IILITFITLIVISLVTAIGIT). The Extracellular segment spans residues 50-863 (LAIIKTSPDI…KPIIRPKKHF (814 aa)). A transglycosylase region spans residues 71–248 (SKIYDDKGEL…PSVYYPYSRT (178 aa)). Glu110 serves as the catalytic Proton donor; for transglycosylase activity. The segment at 392–674 (ASAVLTDYHT…AAALFGKIMN (283 aa)) is transpeptidase. Catalysis depends on Ser431, which acts as the Acyl-ester intermediate; for transpeptidase activity. Positions 774–863 (DDDMYVLPDK…KPIIRPKKHF (90 aa)) are disordered. Over residues 808–836 (EDATNEASTEPSPNTDTVPEDSTNNLDPT) the composition is skewed to polar residues. Positions 837–846 (KNTEKKPSDK) are enriched in basic and acidic residues. Residues 847–863 (KNKKHVIKPIIRPKKHF) show a composition bias toward basic residues.

The protein in the N-terminal section; belongs to the glycosyltransferase 51 family. This sequence in the C-terminal section; belongs to the transpeptidase family.

Its subcellular location is the cell membrane. It carries out the reaction [GlcNAc-(1-&gt;4)-Mur2Ac(oyl-L-Ala-gamma-D-Glu-L-Lys-D-Ala-D-Ala)](n)-di-trans,octa-cis-undecaprenyl diphosphate + beta-D-GlcNAc-(1-&gt;4)-Mur2Ac(oyl-L-Ala-gamma-D-Glu-L-Lys-D-Ala-D-Ala)-di-trans,octa-cis-undecaprenyl diphosphate = [GlcNAc-(1-&gt;4)-Mur2Ac(oyl-L-Ala-gamma-D-Glu-L-Lys-D-Ala-D-Ala)](n+1)-di-trans,octa-cis-undecaprenyl diphosphate + di-trans,octa-cis-undecaprenyl diphosphate + H(+). The catalysed reaction is Preferential cleavage: (Ac)2-L-Lys-D-Ala-|-D-Ala. Also transpeptidation of peptidyl-alanyl moieties that are N-acyl substituents of D-alanine.. The protein operates within cell wall biogenesis; peptidoglycan biosynthesis. In terms of biological role, cell wall formation. Synthesis of cross-linked peptidoglycan from the lipid intermediates. The enzyme has a penicillin-insensitive transglycosylase N-terminal domain (formation of linear glycan strands) and a penicillin-sensitive transpeptidase C-terminal domain (cross-linking of the peptide subunits). In Clostridium novyi (strain NT), this protein is Penicillin-binding protein 1A (pbpA).